The sequence spans 154 residues: Endoribonuclease YbeY (154 aa).

Zn(2+) is bound by residues His113, His117, and His123.

This sequence belongs to the endoribonuclease YbeY family. Requires Zn(2+) as cofactor.

It is found in the cytoplasm. Functionally, single strand-specific metallo-endoribonuclease involved in late-stage 70S ribosome quality control and in maturation of the 3' terminus of the 16S rRNA. This is Endoribonuclease YbeY from Aeromonas salmonicida (strain A449).